A 625-amino-acid polypeptide reads, in one-letter code: Sphingomyelin phosphodiesterase (625 aa).

Positions 1–20 (MPRHGVSPGQGLPRSGREQA) are disordered. A signal peptide spans 1-40 (MPRHGVSPGQGLPRSGREQASDRSLGAPCLRLLWLGLALA). Positions 81–165 (WNLTCPTCKG…LLGSSCGHWD (85 aa)) constitute a Saposin B-type domain. N-linked (GlcNAc...) asparagine glycosylation is present at Asn82. Cystine bridges form between Cys85-Cys161, Cys88-Cys153, and Cys116-Cys127. N-linked (GlcNAc...) asparagine glycosylation is present at Asn171. Residues Asp202 and His204 each contribute to the Zn(2+) site. 2 disulfides stabilise this stretch: Cys217-Cys222 and Cys223-Cys246. Zn(2+) is bound by residues Asp274 and Asn314. Residues Asn331 and Asn391 are each glycosylated (N-linked (GlcNAc...) asparagine). A disulfide bond links Cys381 and Cys427. The Zn(2+) site is built by His421, His453, and His455. An N-linked (GlcNAc...) asparagine glycan is attached at Asn499. Ser504 carries the phosphoserine modification. Asn516 carries an N-linked (GlcNAc...) asparagine glycan. 2 cysteine pairs are disulfide-bonded: Cys580/Cys584 and Cys590/Cys603.

The protein belongs to the acid sphingomyelinase family. As to quaternary structure, monomer. Interacts with SORT1; the interaction is required for SMPD1 targeting to lysosomes. Requires Zn(2+) as cofactor. Post-translationally, proteolytically processed. Mature lysosomal form arises from C-terminal proteolytic processing of pro-sphingomyelin phosphodiesterase. Both lysosomal and secreted forms are glycosylated but they show a differential pattern of glycosylation. In terms of processing, phosphorylated at Ser-504 by PRKCD upon stress stimuli. Phosphorylation is required for secretion. Post-translationally, this form is generated following cleavage by CASP7 in the extracellular milieu. It shows increased activity.

It localises to the lysosome. It is found in the lipid droplet. The protein resides in the secreted. Its subcellular location is the extracellular space. The enzyme catalyses a sphingomyelin + H2O = phosphocholine + an N-acylsphing-4-enine + H(+). It catalyses the reaction N-(octadecanoyl)-sphing-4-enine-1-phosphocholine + H2O = N-octadecanoylsphing-4-enine + phosphocholine + H(+). It carries out the reaction a 1,2-diacyl-sn-glycero-3-phosphocholine + H2O = phosphocholine + a 1,2-diacyl-sn-glycerol + H(+). The catalysed reaction is 1,2-dihexadecanoyl-sn-glycero-3-phosphocholine + H2O = 1,2-dihexadecanoyl-sn-glycerol + phosphocholine + H(+). Hydrolysis of liposomal sphingomyelin is stimulated by incorporation of diacylglycerol (DAG), ceramide and free fatty acids into the liposomal membranes. Phosphatidylcholine hydrolysis is inhibited by incorporation of cholesterol, ceramide, DAG, monoacylglycerol and fatty acids. In terms of biological role, converts sphingomyelin to ceramide. Exists as two enzymatic forms that arise from alternative trafficking of a single protein precursor, one that is targeted to the endolysosomal compartment, whereas the other is released extracellularly. However, in response to various forms of stress, lysosomal exocytosis may represent a major source of the secretory form. Functionally, in the lysosomes, converts sphingomyelin to ceramide. Plays an important role in the export of cholesterol from the intraendolysosomal membranes. Also has phospholipase C activities toward 1,2-diacylglycerolphosphocholine and 1,2-diacylglycerolphosphoglycerol. Modulates stress-induced apoptosis through the production of ceramide. When secreted, modulates cell signaling with its ability to reorganize the plasma membrane by converting sphingomyelin to ceramide. Secreted form is increased in response to stress and inflammatory mediators such as IL1B, IFNG or TNF as well as upon infection with bacteria and viruses. Produces the release of ceramide in the outer leaflet of the plasma membrane playing a central role in host defense. Ceramide reorganizes these rafts into larger signaling platforms that are required to internalize bacteria, induce apoptosis and regulate the cytokine response in infected cells. In wounded cells, the lysosomal form is released extracellularly in the presence of Ca(2+) and promotes endocytosis and plasma membrane repair. Its function is as follows. This form is generated following cleavage by CASP7 in the extracellular milieu in response to bacterial infection. It shows increased ability to convert sphingomyelin to ceramide and promotes plasma membrane repair. Plasma membrane repair by ceramide counteracts the action of gasdermin-D (GSDMD) perforin (PRF1) pores that are formed in response to bacterial infection. The polypeptide is Sphingomyelin phosphodiesterase (SMPD1) (Bos taurus (Bovine)).